We begin with the raw amino-acid sequence, 284 residues long: Protein phosphatase 1 regulatory subunit 3B (284 aa).

Residues 61–64 (RVSF) carry the PP1-binding motif motif. The CBM21 domain occupies 124-232 (RNRLQTNHVC…SNKGKNYRIT (109 aa)). Ser-260 carries the phosphoserine modification.

Interacts with glycogen, PPP1CC catalytic subunit of PP1 and PYGL. Associates with glycogen particles. Forms complexes with debranching enzyme, glycogen phosphorylase, glycogen synthase and phosphorylase kinase which is necessary for its regulation of PP1 activity. In terms of tissue distribution, highly expressed in liver (at protein level). Expressed predominantly in liver. Expressed moderately in heart. Expressed weakly in prostate, stomach, thyroid, lung, kidney, spleen and skeletal muscle.

Acts as a glycogen-targeting subunit for phosphatase PP1. Facilitates interaction of the PP1 with enzymes of the glycogen metabolism and regulates its activity. Suppresses the rate at which PP1 dephosphorylates (inactivates) glycogen phosphorylase and enhances the rate at which it activates glycogen synthase and therefore limits glycogen breakdown. Its activity is inhibited by PYGL, resulting in inhibition of the glycogen synthase and glycogen phosphorylase phosphatase activities of PP1. Dramatically increases basal and insulin-stimulated glycogen synthesis upon overexpression in hepatocytes. The polypeptide is Protein phosphatase 1 regulatory subunit 3B (Ppp1r3b) (Mus musculus (Mouse)).